The following is a 342-amino-acid chain: Autoinducer 2 import system permease protein LsrC (342 aa).

At Met-1–Ala-13 the chain is on the periplasmic side. A helical transmembrane segment spans residues Leu-14 to Val-34. Residues Gln-35–Thr-38 lie on the Cytoplasmic side of the membrane. Residues Met-39–Leu-59 form a helical membrane-spanning segment. Topologically, residues Thr-60–Ser-69 are periplasmic. A helical transmembrane segment spans residues Ile-70–Val-90. Residues Ala-91 to Cys-92 are Cytoplasmic-facing. A helical transmembrane segment spans residues Val-93 to Leu-113. Residue Lys-114 is a topological domain, periplasmic. Residues Ile-115–Trp-135 traverse the membrane as a helical segment. Over Thr-136–Pro-154 the chain is Cytoplasmic. Residues Leu-155–Trp-175 traverse the membrane as a helical segment. Residues Leu-176–Ser-212 lie on the Periplasmic side of the membrane. Residues Leu-213–Pro-233 form a helical membrane-spanning segment. Residues Asn-234–Gly-251 lie on the Cytoplasmic side of the membrane. Residues Gly-252 to Leu-272 traverse the membrane as a helical segment. Residues Thr-273–Arg-283 are Periplasmic-facing. The helical transmembrane segment at Ile-284–Asp-304 threads the bilayer. Residues Gly-305–Ala-342 lie on the Cytoplasmic side of the membrane.

Belongs to the binding-protein-dependent transport system permease family. AraH/RbsC subfamily. The complex is composed of two ATP-binding proteins (LsrA), two transmembrane proteins (LsrC and LsrD) and a solute-binding protein (LsrB).

It is found in the cell inner membrane. Its function is as follows. Part of the ABC transporter complex LsrABCD involved in autoinducer 2 (AI-2) import. Probably responsible for the translocation of the substrate across the membrane. The protein is Autoinducer 2 import system permease protein LsrC (lsrC) of Escherichia coli (strain SMS-3-5 / SECEC).